A 91-amino-acid chain; its full sequence is Co-chaperonin GroES (91 aa).

It belongs to the GroES chaperonin family. Heptamer of 7 subunits arranged in a ring. Interacts with the chaperonin GroEL.

The protein resides in the cytoplasm. Functionally, together with the chaperonin GroEL, plays an essential role in assisting protein folding. The GroEL-GroES system forms a nano-cage that allows encapsulation of the non-native substrate proteins and provides a physical environment optimized to promote and accelerate protein folding. GroES binds to the apical surface of the GroEL ring, thereby capping the opening of the GroEL channel. In Oenococcus oeni (strain ATCC BAA-331 / PSU-1), this protein is Co-chaperonin GroES.